A 438-amino-acid polypeptide reads, in one-letter code: Tol-Pal system protein TolB (438 aa).

A signal peptide spans 1–35 (MITMKNILKLRATGLLLLLLLMISVLGNGIGQAMA).

It belongs to the TolB family. As to quaternary structure, the Tol-Pal system is composed of five core proteins: the inner membrane proteins TolA, TolQ and TolR, the periplasmic protein TolB and the outer membrane protein Pal. They form a network linking the inner and outer membranes and the peptidoglycan layer.

It is found in the periplasm. In terms of biological role, part of the Tol-Pal system, which plays a role in outer membrane invagination during cell division and is important for maintaining outer membrane integrity. This is Tol-Pal system protein TolB from Desulfotalea psychrophila (strain LSv54 / DSM 12343).